The primary structure comprises 170 residues: Flavodoxin (170 aa).

The 162-residue stretch at 4–165 folds into the Flavodoxin-like domain; sequence IGLFFGTQTG…RIQAWVAQLK (162 aa).

Belongs to the flavodoxin family. It depends on FMN as a cofactor.

Functionally, low-potential electron donor to a number of redox enzymes. The sequence is that of Flavodoxin (isiB) from Picosynechococcus sp. (strain ATCC 27264 / PCC 7002 / PR-6) (Agmenellum quadruplicatum).